Consider the following 324-residue polypeptide: Zinc metalloproteinase leucurolysin-B (324 aa).

Positions 1–119 constitute a Peptidase M12B domain; that stretch reads DTVLLNRISH…LNPQCILNEP (119 aa). A Ca(2+)-binding site is contributed by Asp-11. Cystine bridges form between Cys-34-Cys-114, Cys-74-Cys-98, and Cys-76-Cys-81. Residue His-59 coordinates Zn(2+). Glu-60 is an active-site residue. Positions 63 and 69 each coordinate Zn(2+). The N-linked (GlcNAc...) asparagine glycan is linked to Asn-97. The Ca(2+) site is built by Cys-114, Asn-117, Val-129, Asn-132, Leu-134, Glu-136, Glu-139, and Asp-142. Residues 127 to 213 enclose the Disintegrin domain; the sequence is PPVCGNELLE…QCPTDDFKRN (87 aa). 13 cysteine pairs are disulfide-bonded: Cys-130–Cys-159, Cys-141–Cys-154, Cys-143–Cys-149, Cys-153–Cys-176, Cys-167–Cys-173, Cys-172–Cys-198, Cys-185–Cys-205, Cys-192–Cys-224, Cys-217–Cys-229, Cys-236–Cys-286, Cys-251–Cys-295, Cys-264–Cys-274, and Cys-281–Cys-315. Positions 191 to 193 match the D/ECD-tripeptide motif; the sequence is ECD. 2 N-linked (GlcNAc...) asparagine glycosylation sites follow: Asn-296 and Asn-305.

It belongs to the venom metalloproteinase (M12B) family. P-III subfamily. P-IIIa sub-subfamily. In terms of assembly, monomer. Zn(2+) serves as cofactor. Post-translationally, N-glycosylated. The N-terminus is blocked. As to expression, expressed by the venom gland.

The protein localises to the secreted. With respect to regulation, inhibited by EDTA, but not by PMSF. Pre-incubation with 2 mM DTT completely abolishes activity. Its function is as follows. Snake venom zinc metalloproteinase that acts as a potent hemorrhagic toxin. Hydrolyzes the insulin B chain at the 14-Ala-|-Leu-15 bond but not the 16-Tyr-|-Leu-17 bond. Degrades the alpha-chain of fibrin and hydrolyzes the Aalpha-chain of fibrinogen (FGA) while leaving the beta and gamma chains unaffected. Degrades type-I collagen and its gelatin. Degrades the alpha-1 chain of type-IV collagen and its gelatin but not the alpha-2 chain. Degrades plasma fibronectin, plasma vitronectin and basement membrane enactin. It inhibits collagen-induced platelet aggregation. This chain is Zinc metalloproteinase leucurolysin-B, found in Bothrops leucurus (Whitetail lancehead).